A 403-amino-acid chain; its full sequence is Probable tRNA sulfurtransferase (403 aa).

One can recognise a THUMP domain in the interval Glu-61–Glu-166. ATP-binding positions include Leu-184–Leu-185, His-209–Phe-210, Arg-266, Gly-288, and Gln-297.

Belongs to the ThiI family.

Its subcellular location is the cytoplasm. It carries out the reaction [ThiI sulfur-carrier protein]-S-sulfanyl-L-cysteine + a uridine in tRNA + 2 reduced [2Fe-2S]-[ferredoxin] + ATP + H(+) = [ThiI sulfur-carrier protein]-L-cysteine + a 4-thiouridine in tRNA + 2 oxidized [2Fe-2S]-[ferredoxin] + AMP + diphosphate. The enzyme catalyses [ThiS sulfur-carrier protein]-C-terminal Gly-Gly-AMP + S-sulfanyl-L-cysteinyl-[cysteine desulfurase] + AH2 = [ThiS sulfur-carrier protein]-C-terminal-Gly-aminoethanethioate + L-cysteinyl-[cysteine desulfurase] + A + AMP + 2 H(+). It functions in the pathway cofactor biosynthesis; thiamine diphosphate biosynthesis. Its function is as follows. Catalyzes the ATP-dependent transfer of a sulfur to tRNA to produce 4-thiouridine in position 8 of tRNAs, which functions as a near-UV photosensor. Also catalyzes the transfer of sulfur to the sulfur carrier protein ThiS, forming ThiS-thiocarboxylate. This is a step in the synthesis of thiazole, in the thiamine biosynthesis pathway. The sulfur is donated as persulfide by IscS. The sequence is that of Probable tRNA sulfurtransferase from Bacillus cytotoxicus (strain DSM 22905 / CIP 110041 / 391-98 / NVH 391-98).